The following is a 58-amino-acid chain: Large ribosomal subunit protein uL30 (58 aa).

The protein belongs to the universal ribosomal protein uL30 family. As to quaternary structure, part of the 50S ribosomal subunit.

The chain is Large ribosomal subunit protein uL30 from Erythrobacter litoralis (strain HTCC2594).